The following is a 53-amino-acid chain: Putative defensin-like protein 53 (53 aa).

4 disulfides stabilise this stretch: Cys-12/Cys-51, Cys-16/Cys-40, Cys-26/Cys-49, and Cys-30/Cys-50.

This sequence belongs to the DEFL family.

In Arabidopsis thaliana (Mouse-ear cress), this protein is Putative defensin-like protein 53.